The primary structure comprises 125 residues: Calcitonin receptor-stimulating peptide 1 (125 aa).

The signal sequence occupies residues 1-25; that stretch reads MGFWKFPPFLVLSILVLYQAGMFHA. A propeptide spanning residues 26–77 is cleaved from the precursor; sequence APFRSVFDGRFDPATLDEEESRLLLAAMVNDYEQMRARESEKAQKTEGSRIQ. Residues cysteine 81 and cysteine 86 are joined by a disulfide bond.

Belongs to the calcitonin family.

Its subcellular location is the secreted. In terms of biological role, stimulates cAMP production in porcine kidney cell line LLC-PK1 via the calcitonin receptor (CT) but not via the CT-like (CL) receptor. This Bos taurus (Bovine) protein is Calcitonin receptor-stimulating peptide 1 (CRSP1).